We begin with the raw amino-acid sequence, 384 residues long: Glutamate 5-kinase (384 aa).

Residue lysine 24 coordinates ATP. Substrate contacts are provided by serine 64, aspartate 149, and asparagine 161. Residues 181–182 (TD) and 223–229 (TGGMRTK) each bind ATP. One can recognise a PUA domain in the interval 288 to 370 (PGAILIDAGA…RDIQPLLGYT (83 aa)).

It belongs to the glutamate 5-kinase family.

The protein localises to the cytoplasm. The catalysed reaction is L-glutamate + ATP = L-glutamyl 5-phosphate + ADP. The protein operates within amino-acid biosynthesis; L-proline biosynthesis; L-glutamate 5-semialdehyde from L-glutamate: step 1/2. Catalyzes the transfer of a phosphate group to glutamate to form L-glutamate 5-phosphate. The chain is Glutamate 5-kinase from Xylella fastidiosa (strain 9a5c).